The chain runs to 62 residues: Large ribosomal subunit protein bL28 (62 aa).

The interval 1-27 (MAKECVITGRKSRSGNKRSHAMNSSKR) is disordered. Over residues 10–20 (RKSRSGNKRSH) the composition is skewed to basic residues.

Belongs to the bacterial ribosomal protein bL28 family.

This is Large ribosomal subunit protein bL28 from Listeria innocua serovar 6a (strain ATCC BAA-680 / CLIP 11262).